A 176-amino-acid chain; its full sequence is Small ribosomal subunit protein uS5 (176 aa).

The region spanning 11 to 74 (LSEVLVDVNR…QAAKKRMMKV (64 aa)) is the S5 DRBM domain.

It belongs to the universal ribosomal protein uS5 family. As to quaternary structure, part of the 30S ribosomal subunit. Contacts proteins S4 and S8.

With S4 and S12 plays an important role in translational accuracy. Functionally, located at the back of the 30S subunit body where it stabilizes the conformation of the head with respect to the body. The sequence is that of Small ribosomal subunit protein uS5 from Rickettsia africae (strain ESF-5).